Here is a 90-residue protein sequence, read N- to C-terminus: Large ribosomal subunit protein eL31 (90 aa).

Belongs to the eukaryotic ribosomal protein eL31 family.

This is Large ribosomal subunit protein eL31 from Thermococcus gammatolerans (strain DSM 15229 / JCM 11827 / EJ3).